Reading from the N-terminus, the 151-residue chain is Large ribosomal subunit protein bL28c (151 aa).

Residues 1-74 constitute a chloroplast transit peptide; that stretch reads MATMVAGISL…PFKPSLQPVA (74 aa).

It belongs to the bacterial ribosomal protein bL28 family. In terms of assembly, part of the 50S ribosomal subunit.

It is found in the plastid. The protein localises to the chloroplast. In Nicotiana tabacum (Common tobacco), this protein is Large ribosomal subunit protein bL28c (RPL28).